Reading from the N-terminus, the 250-residue chain is Probable chemoreceptor glutamine deamidase CheD (250 aa).

Belongs to the CheD family.

It catalyses the reaction L-glutaminyl-[protein] + H2O = L-glutamyl-[protein] + NH4(+). Its function is as follows. Probably deamidates glutamine residues to glutamate on methyl-accepting chemotaxis receptors (MCPs), playing an important role in chemotaxis. This chain is Probable chemoreceptor glutamine deamidase CheD, found in Paraburkholderia xenovorans (strain LB400).